The chain runs to 371 residues: tRNA-specific 2-thiouridylase MnmA (371 aa).

ATP is bound by residues glycine 14 to serine 21 and methionine 40. Residues asparagine 100 to aspartate 102 are interaction with target base in tRNA. Cysteine 105 (nucleophile) is an active-site residue. Residues cysteine 105 and cysteine 205 are joined by a disulfide bond. Glycine 129 is an ATP binding site. The segment at lysine 155–glutamine 157 is interaction with tRNA. Cysteine 205 functions as the Cysteine persulfide intermediate in the catalytic mechanism. The segment at arginine 321–tyrosine 322 is interaction with tRNA.

The protein belongs to the MnmA/TRMU family.

Its subcellular location is the cytoplasm. It carries out the reaction S-sulfanyl-L-cysteinyl-[protein] + uridine(34) in tRNA + AH2 + ATP = 2-thiouridine(34) in tRNA + L-cysteinyl-[protein] + A + AMP + diphosphate + H(+). Its function is as follows. Catalyzes the 2-thiolation of uridine at the wobble position (U34) of tRNA, leading to the formation of s(2)U34. In Bordetella parapertussis (strain 12822 / ATCC BAA-587 / NCTC 13253), this protein is tRNA-specific 2-thiouridylase MnmA.